Consider the following 141-residue polypeptide: Large ribosomal subunit protein uL23B (141 aa).

Residues 1–22 form a disordered region; it reads MSVGKAKGAQKTVQKGIHNKVA.

This sequence belongs to the universal ribosomal protein uL23 family. Component of the large ribosomal subunit (LSU). Mature yeast ribosomes consist of a small (40S) and a large (60S) subunit. The 40S small subunit contains 1 molecule of ribosomal RNA (18S rRNA) and at least 33 different proteins. The large 60S subunit contains 3 rRNA molecules (25S, 5.8S and 5S rRNA) and at least 46 different proteins. uL23 is associated with the polypeptide exit tunnel.

Its subcellular location is the cytoplasm. Its function is as follows. This protein binds to a specific region on the 26S rRNA. In terms of biological role, component of the ribosome, a large ribonucleoprotein complex responsible for the synthesis of proteins in the cell. The small ribosomal subunit (SSU) binds messenger RNAs (mRNAs) and translates the encoded message by selecting cognate aminoacyl-transfer RNA (tRNA) molecules. The large subunit (LSU) contains the ribosomal catalytic site termed the peptidyl transferase center (PTC), which catalyzes the formation of peptide bonds, thereby polymerizing the amino acids delivered by tRNAs into a polypeptide chain. The nascent polypeptides leave the ribosome through a tunnel in the LSU and interact with protein factors that function in enzymatic processing, targeting, and the membrane insertion of nascent chains at the exit of the ribosomal tunnel. uL23 is a major component of the universal docking site for these factors at the polypeptide exit tunnel. The chain is Large ribosomal subunit protein uL23B (rpl2502) from Schizosaccharomyces pombe (strain 972 / ATCC 24843) (Fission yeast).